Reading from the N-terminus, the 257-residue chain is uncharacterized protein (257 aa).

Positions 1 to 26 (MKKAFILSAAAAVGLFTFGGVQQASA) are cleaved as a signal peptide. Positions 80–135 (AKQSNVKVQDVQKTETAKPAQKTTEKAAADQNTASKAPATAEKTNTTTSAPSSVSA) are disordered. A compositionally biased stretch (polar residues) spans 121-134 (EKTNTTTSAPSSVS). One can recognise an SCP domain in the interval 141 to 254 (VELTNAERQK…ESGSIWTQQF (114 aa)).

This is an uncharacterized protein from Bacillus subtilis (strain 168).